Consider the following 346-residue polypeptide: GTPase Obg (346 aa).

In terms of domain architecture, Obg spans 1 to 159; sequence MQFVDEANIR…RNLGLELSVL (159 aa). Positions 127 to 149 are disordered; the sequence is NVHFKSSTNRTPRQCTPGEPGDE. Residues 130 to 140 are compositionally biased toward polar residues; sequence FKSSTNRTPRQ. The 174-residue stretch at 160–333 folds into the OBG-type G domain; that stretch reads ADVGLLGMPN…LVKEVAYGLE (174 aa). GTP-binding positions include 166-173, 191-195, 213-216, 283-286, and 314-316; these read GMPNAGKS, FTTLY, DIPG, NKTD, and SAV. Mg(2+)-binding residues include Ser-173 and Thr-193.

It belongs to the TRAFAC class OBG-HflX-like GTPase superfamily. OBG GTPase family. Monomer. Mg(2+) is required as a cofactor.

The protein resides in the cytoplasm. An essential GTPase which binds GTP, GDP and possibly (p)ppGpp with moderate affinity, with high nucleotide exchange rates and a fairly low GTP hydrolysis rate. Plays a role in control of the cell cycle, stress response, ribosome biogenesis and in those bacteria that undergo differentiation, in morphogenesis control. This Hydrogenovibrio crunogenus (strain DSM 25203 / XCL-2) (Thiomicrospira crunogena) protein is GTPase Obg.